The primary structure comprises 87 residues: Small ribosomal subunit protein bS20 (87 aa).

Residues 1-27 are disordered; it reads MANIKSAKKRAVQSEKRRKHNASRRSM.

The protein belongs to the bacterial ribosomal protein bS20 family.

Its function is as follows. Binds directly to 16S ribosomal RNA. The polypeptide is Small ribosomal subunit protein bS20 (Pectobacterium carotovorum subsp. carotovorum (strain PC1)).